The primary structure comprises 475 residues: MAKTLFEKVWEQHLVAEPANEPALLYIDLHLVHEVTSPQAFDGLRMTGRKLRRPDRTVATVDHNVPTIAADRLIIKDEIAARQIDALRRNCAEFGVELFDVQSREQGIVHVIGPELGLTKPGMTIVCGDSHTSTHGAFGALAFGIGTSEVEHVMATQCLPQGRPKTFRISVEGELPEGVTAKDIVLGIIGRIGTDGATGYVIEYAGSAIRSLSMEGRMTVCNMSIEAGARAGMIAPDETTFAYLKDREYSPKGKAWDEAVAAWSELKTDEGATFDRELVIPAIELTPYVTWGTNPGMVIPITDEIPGPETAASEADQRGIERALEYMGLKPGTPMEEVAIDVVFIGSCTNSRIEDLRAAAKVVTGYRVNEKVRAMVVPGSHRVKEQAEREGLDRIFREAGFEWREPGCSMCLGMNPDILTPGERCASTSNRNFEGRQGRGGRTHLVSPMMAAAAAITGHFSDIRTWEFKGEEVLA.

Residues C348, C408, and C411 each contribute to the [4Fe-4S] cluster site.

It belongs to the aconitase/IPM isomerase family. LeuC type 1 subfamily. Heterodimer of LeuC and LeuD. Requires [4Fe-4S] cluster as cofactor.

The catalysed reaction is (2R,3S)-3-isopropylmalate = (2S)-2-isopropylmalate. It participates in amino-acid biosynthesis; L-leucine biosynthesis; L-leucine from 3-methyl-2-oxobutanoate: step 2/4. Its function is as follows. Catalyzes the isomerization between 2-isopropylmalate and 3-isopropylmalate, via the formation of 2-isopropylmaleate. This Acidobacterium capsulatum (strain ATCC 51196 / DSM 11244 / BCRC 80197 / JCM 7670 / NBRC 15755 / NCIMB 13165 / 161) protein is 3-isopropylmalate dehydratase large subunit.